The primary structure comprises 142 residues: Salivary protein 15a (142 aa).

An N-terminal signal peptide occupies residues Met-1 to Ala-20. Cystine bridges form between Cys-27–Cys-44, Cys-40–Cys-108, and Cys-91–Cys-117.

This sequence belongs to the PBP/GOBP family. Female salivary gland (at protein level).

The protein resides in the secreted. Functionally, inhibits contact coagulation pathway activation in the host by sequestering anionic polymers, such as polyphosphate and dextran sulfate, and thus blocking interaction of protein components of the pathway with negatively charged surfaces. Inhibits dextran sulfate-mediated autoactivation of host coagulation factor XII (F12). Inhibits dextran sulfate-mediated autoactivation of host factor XI (F11). Inhibits polyphosphate-mediated activation of host F11 by thrombin (F2). May inhibit dextran sulfate-mediated bradykinin generation in host plasma. This is Salivary protein 15a from Phlebotomus duboscqi (Sandfly).